Here is a 95-residue protein sequence, read N- to C-terminus: Cell division protein FtsB (95 aa).

Residues 1-3 (MKW) are Cytoplasmic-facing. A helical transmembrane segment spans residues 4 to 21 (VTGLLVVLLLGLQYKLWI). Residues 22-95 (GEGSVAEVWQ…QVVGRPGETP (74 aa)) are Periplasmic-facing. Positions 26–73 (VAEVWQLRQTLEAQRAENEELRYRNAALDAEVTDLKTGLDAIEERARR) form a coiled coil.

The protein belongs to the FtsB family. In terms of assembly, part of a complex composed of FtsB, FtsL and FtsQ.

It is found in the cell inner membrane. Its function is as follows. Essential cell division protein. May link together the upstream cell division proteins, which are predominantly cytoplasmic, with the downstream cell division proteins, which are predominantly periplasmic. The sequence is that of Cell division protein FtsB from Thioalkalivibrio sulfidiphilus (strain HL-EbGR7).